The following is a 197-amino-acid chain: Dehydrin DHN1 (197 aa).

The segment covering 1–14 has biased composition (polar residues); that stretch reads MSQYQNQYGAQTGM. Disordered regions lie at residues 1–86 and 133–197; these read MSQY…GTNP and GTEQ…CTGH. Tandem repeats lie at residues 16–21 and 26–31. The interval 16-31 is 2 X approximate repeats; the sequence is DEYGNPVNQVDQYGNP. Over residues 74–83 the composition is skewed to gly residues; the sequence is THTGGVGGYG. One copy of the 2-1 repeat lies at 126 to 133; the sequence is KIKEKIPG. The 2 X approximate repeats stretch occupies residues 126-190; sequence KIKEKIPGTE…MDKIKEKLPG (65 aa). Residues 144 to 160 are compositionally biased toward gly residues; sequence AGYGSTGYGASGGGIGN. A compositionally biased stretch (basic and acidic residues) spans 165-188; that stretch reads YVREEHRVDHGEKKGIMDKIKEKL. The stretch at 183-190 is one 2-2 repeat; it reads KIKEKLPG.

It belongs to the plant dehydrin family. In terms of tissue distribution, shoots, roots, and cotyledon from dehydrating seedlings.

The chain is Dehydrin DHN1 (DHN1) from Pisum sativum (Garden pea).